The primary structure comprises 79 residues: Sulfur carrier protein TusA (79 aa).

The active-site Cysteine persulfide intermediate is the C17.

Belongs to the sulfur carrier protein TusA family.

Its subcellular location is the cytoplasm. Functionally, sulfur carrier protein which probably makes part of a sulfur-relay system. The polypeptide is Sulfur carrier protein TusA (Histophilus somni (strain 129Pt) (Haemophilus somnus)).